We begin with the raw amino-acid sequence, 630 residues long: Ribonucleoside-diphosphate reductase large subunit (630 aa).

Substrate contacts are provided by residues serine 67, 82–83 (AC), glycine 111, 317–321 (NLCSE), and 459–463 (PNATS). A disulfide bridge connects residues cysteine 83 and cysteine 334. The active-site Proton acceptor is asparagine 317. The Cysteine radical intermediate role is filled by cysteine 319. Glutamate 321 (proton acceptor) is an active-site residue.

It belongs to the ribonucleoside diphosphate reductase large chain family. As to quaternary structure, heterotetramer composed of a homodimer of the large subunit (R1) and a homodimer of the small subunit (R2). Larger multisubunit protein complex are also active, composed of (R1)n(R2)n.

The catalysed reaction is a 2'-deoxyribonucleoside 5'-diphosphate + [thioredoxin]-disulfide + H2O = a ribonucleoside 5'-diphosphate + [thioredoxin]-dithiol. With respect to regulation, under complex allosteric control mediated by deoxynucleoside triphosphates and ATP binding. The type of nucleotide bound at the specificity site determines substrate preference. It seems probable that ATP makes the enzyme reduce CDP and UDP, dGTP favors ADP reduction and dTTP favors GDP reduction. In terms of biological role, ribonucleoside-diphosphate reductase holoenzyme provides the precursors necessary for viral DNA synthesis. Allows virus growth in non-dividing cells. Catalyzes the biosynthesis of deoxyribonucleotides from the corresponding ribonucleotides. This chain is Ribonucleoside-diphosphate reductase large subunit, found in Aedes vexans (Inland floodwater mosquito).